We begin with the raw amino-acid sequence, 404 residues long: Acetylornithine aminotransferase (404 aa).

Pyridoxal 5'-phosphate is bound by residues 113 to 114 (GT) and Phe139. Residue Arg142 participates in N(2)-acetyl-L-ornithine binding. Residue 224-227 (DEVQ) coordinates pyridoxal 5'-phosphate. Position 253 is an N6-(pyridoxal phosphate)lysine (Lys253). Ser281 provides a ligand contact to N(2)-acetyl-L-ornithine. Residue Thr282 coordinates pyridoxal 5'-phosphate.

Belongs to the class-III pyridoxal-phosphate-dependent aminotransferase family. ArgD subfamily. In terms of assembly, homodimer. Pyridoxal 5'-phosphate serves as cofactor.

The protein resides in the cytoplasm. The enzyme catalyses N(2)-acetyl-L-ornithine + 2-oxoglutarate = N-acetyl-L-glutamate 5-semialdehyde + L-glutamate. Its pathway is amino-acid biosynthesis; L-arginine biosynthesis; N(2)-acetyl-L-ornithine from L-glutamate: step 4/4. This chain is Acetylornithine aminotransferase, found in Mycobacterium leprae (strain TN).